Consider the following 323-residue polypeptide: G patch domain-containing protein 4 (323 aa).

Disordered stretches follow at residues 1–32, 84–110, 124–185, and 197–323; these read MSAS…GLGR, GVKV…SNRN, PGGE…SAKL, and AKYG…NKSE. Composition is skewed to basic and acidic residues over residues 9–32 and 84–94; these read SQGR…GLGR and GVKVNRTKDDD. A G-patch domain is found at 11 to 57; sequence GRRFAEQQMHKHGWTEGKGLGRRENGISEAIKVKVKCDHAGVGHNSA. The span at 131 to 141 shows a compositional bias: low complexity; that stretch reads KEPSSSESSDS. Positions 252 to 261 are enriched in acidic residues; that stretch reads EREEEEEEES. Residues 281–291 are compositionally biased toward basic residues; that stretch reads SKKKKSKKKHR. A compositionally biased stretch (polar residues) spans 294–306; the sequence is SASPQEEQVTEST. The segment covering 311–323 has biased composition (basic residues); sequence KPKKKKKKKNKSE.

The chain is G patch domain-containing protein 4 (gpatch4) from Xenopus tropicalis (Western clawed frog).